We begin with the raw amino-acid sequence, 492 residues long: 6-phosphogluconate dehydrogenase, decarboxylating (492 aa).

NADP(+) contacts are provided by residues 13 to 18, 36 to 38, 78 to 80, and Asn106; these read GLAVMG, NRT, and VKA. Residue Asn106 participates in substrate binding. At Ser107 the chain carries Phosphoserine. Residue 132–134 coordinates substrate; the sequence is SGG. The active-site Proton acceptor is the Lys187. 190 to 191 lines the substrate pocket; it reads HN. The Proton donor role is filled by Glu194. Tyr195 is a binding site for substrate. Ser215 is modified (phosphoserine). Positions 264, 291, 449, and 455 each coordinate substrate.

Belongs to the 6-phosphogluconate dehydrogenase family. As to quaternary structure, homodimer.

It catalyses the reaction 6-phospho-D-gluconate + NADP(+) = D-ribulose 5-phosphate + CO2 + NADPH. It functions in the pathway carbohydrate degradation; pentose phosphate pathway; D-ribulose 5-phosphate from D-glucose 6-phosphate (oxidative stage): step 3/3. In terms of biological role, catalyzes the oxidative decarboxylation of 6-phosphogluconate to ribulose 5-phosphate and CO(2), with concomitant reduction of NADP to NADPH. The sequence is that of 6-phosphogluconate dehydrogenase, decarboxylating from Schizosaccharomyces pombe (strain 972 / ATCC 24843) (Fission yeast).